Reading from the N-terminus, the 833-residue chain is Phenylalanine--tRNA ligase beta subunit (833 aa).

The 116-residue stretch at 42–157 (ADLKGPLAVG…PEYEVGTDAI (116 aa)) folds into the tRNA-binding domain. Positions 411–485 (SAPHTITIPA…RLEGYENLPS (75 aa)) constitute a B5 domain. Mg(2+) contacts are provided by Asp-463, Asp-469, Glu-472, and Glu-473. Positions 739-832 (STFPVATQDV…AAERTGAALR (94 aa)) constitute an FDX-ACB domain.

This sequence belongs to the phenylalanyl-tRNA synthetase beta subunit family. Type 1 subfamily. In terms of assembly, tetramer of two alpha and two beta subunits. Requires Mg(2+) as cofactor.

The protein resides in the cytoplasm. It catalyses the reaction tRNA(Phe) + L-phenylalanine + ATP = L-phenylalanyl-tRNA(Phe) + AMP + diphosphate + H(+). This Streptomyces avermitilis (strain ATCC 31267 / DSM 46492 / JCM 5070 / NBRC 14893 / NCIMB 12804 / NRRL 8165 / MA-4680) protein is Phenylalanine--tRNA ligase beta subunit.